A 792-amino-acid chain; its full sequence is Kinesin-like protein KIFC2 (792 aa).

2 disordered regions span residues 22-45 (AAAVSDPGDPTQKSGGQPRGRRRP) and 142-184 (QGTQ…QEHQ). Positions 142-169 (QGTQPTCPVQPSTLDGSLSQEESSSQPT) are enriched in polar residues. Residues 186–347 (LQLEEEQRVW…ARMASLRQGC (162 aa)) adopt a coiled-coil conformation. In terms of domain architecture, Kinesin motor spans 409-732 (NIRVLCRLRP…LKFAERVGQV (324 aa)). Residue 486–493 (GQTGTGKT) coordinates ATP. The segment at 734–792 (LGPARRRRAPRSGTPSSLSTDTPLTGTSCTPTPSPGSPPSTSPNSCSGLTLEPPGDPPP) is disordered. Over residues 744–764 (RSGTPSSLSTDTPLTGTSCTP) the composition is skewed to low complexity. Residues 765 to 774 (TPSPGSPPST) show a composition bias toward pro residues.

This sequence belongs to the TRAFAC class myosin-kinesin ATPase superfamily. Kinesin family. In terms of tissue distribution, present in axons and dendrites of neurons in the central and peripheral nervous systems.

The protein resides in the cytoplasm. It localises to the cytoskeleton. In terms of biological role, may play a role in microtubule-dependent retrograde axonal transport. May function as the motor for the transport of multivesicular body (MVB)-like organelles in dendrites. The chain is Kinesin-like protein KIFC2 (Kifc2) from Mus musculus (Mouse).